We begin with the raw amino-acid sequence, 448 residues long: Divalent metal cation transporter MntH (448 aa).

Basic and acidic residues predominate over residues 1–10 (MKKDKTERTK). The segment at 1–20 (MKKDKTERTKQSWRKAQNAP) is disordered. The next 11 membrane-spanning stretches (helical) occupy residues 41-61 (LFAF…PGNW), 69-89 (SEFG…AVLL), 117-137 (GFVL…AEVI), 147-167 (FGIP…LVLF), 176-196 (IEVI…AEMV), 215-235 (IVTN…TVMP), 270-290 (FSLT…AAAF), 307-327 (LLNP…ALLA), 363-383 (VLAI…GINE), 384-404 (LLIF…IPLV), and 424-444 (IISW…LFYT).

It belongs to the NRAMP family.

The protein resides in the cell membrane. H(+)-stimulated, divalent metal cation uptake system. This Listeria monocytogenes serotype 4b (strain CLIP80459) protein is Divalent metal cation transporter MntH.